The sequence spans 331 residues: Glyceraldehyde-3-phosphate dehydrogenase, cytosolic (331 aa).

Residues 11–12 (RI), D33, and R77 each bind NAD(+). Residues 148-150 (SCT), T179, 208-209 (TG), and R231 each bind D-glyceraldehyde 3-phosphate. Catalysis depends on C149, which acts as the Nucleophile. N313 is a binding site for NAD(+).

The protein belongs to the glyceraldehyde-3-phosphate dehydrogenase family. Homotetramer.

The protein localises to the cytoplasm. It catalyses the reaction D-glyceraldehyde 3-phosphate + phosphate + NAD(+) = (2R)-3-phospho-glyceroyl phosphate + NADH + H(+). It participates in carbohydrate degradation; glycolysis; pyruvate from D-glyceraldehyde 3-phosphate: step 1/5. The protein is Glyceraldehyde-3-phosphate dehydrogenase, cytosolic (GAPC) of Leishmania mexicana.